The sequence spans 386 residues: O-phospho-L-seryl-tRNA:Cys-tRNA synthase (386 aa).

Pyridoxal 5'-phosphate contacts are provided by residues 89-90 (AR), Asn196, and 219-221 (SGH). Position 222 is an N6-(pyridoxal phosphate)lysine (Lys222).

It belongs to the SepCysS family. In terms of assembly, homodimer. Interacts with SepRS. Requires pyridoxal 5'-phosphate as cofactor.

It catalyses the reaction O-phospho-L-seryl-tRNA(Cys) + hydrogen sulfide + H(+) = L-cysteinyl-tRNA(Cys) + phosphate. Functionally, converts O-phospho-L-seryl-tRNA(Cys) (Sep-tRNA(Cys)) to L-cysteinyl-tRNA(Cys) (Cys-tRNA(Cys)). In Methanosarcina acetivorans (strain ATCC 35395 / DSM 2834 / JCM 12185 / C2A), this protein is O-phospho-L-seryl-tRNA:Cys-tRNA synthase.